The following is a 229-amino-acid chain: LexA repressor (229 aa).

Positions 26-46 form a DNA-binding region, H-T-H motif; sequence FDEMKEALDLASKSGIHRLIT. Catalysis depends on for autocatalytic cleavage activity residues Ser-149 and Lys-187.

This sequence belongs to the peptidase S24 family. Homodimer.

It catalyses the reaction Hydrolysis of Ala-|-Gly bond in repressor LexA.. In terms of biological role, represses a number of genes involved in the response to DNA damage (SOS response), including recA and lexA. In the presence of single-stranded DNA, RecA interacts with LexA causing an autocatalytic cleavage which disrupts the DNA-binding part of LexA, leading to derepression of the SOS regulon and eventually DNA repair. The polypeptide is LexA repressor (Phenylobacterium zucineum (strain HLK1)).